The chain runs to 400 residues: Argininosuccinate synthase (400 aa).

ATP is bound by residues 10–18 and alanine 38; that span reads AYSGGVDTS. Residue tyrosine 89 participates in L-citrulline binding. Glycine 119 lines the ATP pocket. Positions 121, 125, and 126 each coordinate L-aspartate. Residue asparagine 125 participates in L-citrulline binding. 5 residues coordinate L-citrulline: arginine 129, serine 177, serine 186, glutamate 262, and tyrosine 274.

Belongs to the argininosuccinate synthase family. Type 1 subfamily. In terms of assembly, homotetramer.

It localises to the cytoplasm. It carries out the reaction L-citrulline + L-aspartate + ATP = 2-(N(omega)-L-arginino)succinate + AMP + diphosphate + H(+). It participates in amino-acid biosynthesis; L-arginine biosynthesis; L-arginine from L-ornithine and carbamoyl phosphate: step 2/3. In Trichormus variabilis (strain ATCC 29413 / PCC 7937) (Anabaena variabilis), this protein is Argininosuccinate synthase.